A 132-amino-acid polypeptide reads, in one-letter code: Fatty acid-binding protein 12 (132 aa).

Residues Arg-107 and 127–129 (RTY) contribute to the a fatty acid site.

This sequence belongs to the calycin superfamily. Fatty-acid binding protein (FABP) family. In terms of tissue distribution, highly expressed in adult retina and testis with lower levels in cerebral cortex, kidney and epididymis. In the retina, strongly expressed in the ganglion cell layer and throughout the inner nuclear layer in amacrine and bipolar cells. Not expressed in the outer nuclear layer. In the testis, detected in the seminiferous tubules.

Its function is as follows. May play a role in lipid transport. In Rattus norvegicus (Rat), this protein is Fatty acid-binding protein 12.